A 108-amino-acid polypeptide reads, in one-letter code: Abscisic stress-ripening protein 3 (108 aa).

Disordered regions lie at residues 1–34 (MAEEKQHHRLFHHKNREEEGGPVDHKKKVKHHSH) and 84–108 (FAFHEHHQKKEAKKEKKAAEKGRHH). Positions 15–24 (NREEEGGPVD) are enriched in basic and acidic residues. Residues 25–34 (HKKKVKHHSH) are compositionally biased toward basic residues. Positions 95-108 (AKKEKKAAEKGRHH) are enriched in basic and acidic residues.

Belongs to the abscisic acid and water stress-induced protein family.

The protein is Abscisic stress-ripening protein 3 of Solanum lycopersicum (Tomato).